Here is a 206-residue protein sequence, read N- to C-terminus: Ras-related protein Ral-A (206 aa).

Residues 24–29 (GVGKSA), 40–46 (VEDYEPT), and 127–130 (NKSD) contribute to the GTP site. The short motif at 43-51 (YEPTKADSY) is the Effector region element. Thr-46 carries a (Microbial infection) O-linked (Glc) threonine; by P.sordellii toxin TcsL glycan. A Phosphoserine; by AURKA modification is found at Ser-194. The residue at position 203 (Cys-203) is a Cysteine methyl ester. Cys-203 carries S-geranylgeranyl cysteine lipidation. Residues 204–206 (CIL) constitute a propeptide, removed in mature form.

Belongs to the small GTPase superfamily. Ras family. As to quaternary structure, interacts (via effector domain) with RALBP1; during mitosis, recruits RALBP1 to the mitochondrion where it promotes DNM1L phosphorylation and mitochondrial fission. Interacts with EXOC2/Sec5 and EXOC8/Exo84; binding to EXOC2 and EXOC8 is mutually exclusive. Interacts with Clostridium exoenzyme C3. Interacts with RALGPS1. Interacts with LPAR1 and LPAR2. Interacts with GRK2 in response to LPAR1 activation. RALA and GRK2 binding to LPAR1 is mutually exclusive. Interacts with CDC42. Phosphorylated. Phosphorylation at Ser-194 by AURKA/Aurora kinase A, during mitosis, induces RALA localization to the mitochondrion where it regulates mitochondrial fission. Post-translationally, prenylation is essential for membrane localization. The geranylgeranylated form and the farnesylated mutant do not undergo alternative prenylation in response to geranylgeranyltransferase I inhibitors (GGTIs) and farnesyltransferase I inhibitors (FTIs). In terms of processing, (Microbial infection) Glucosylated at Thr-46 by P.sordellii toxin TcsL from strain 6018. Monoglucosylation completely prevents the recognition of the downstream effector, blocking the GTPases in their inactive form. Not glucosylated by TcsL from strain VPI 9048.

Its subcellular location is the cell membrane. It is found in the cleavage furrow. The protein localises to the midbody. It localises to the midbody ring. The protein resides in the mitochondrion. It carries out the reaction GTP + H2O = GDP + phosphate + H(+). Its activity is regulated as follows. Alternates between an inactive form bound to GDP and an active form bound to GTP. Activated by a guanine nucleotide-exchange factor (GEF) and inactivated by a GTPase-activating protein (GAP). Its function is as follows. Multifunctional GTPase involved in a variety of cellular processes including gene expression, cell migration, cell proliferation, oncogenic transformation and membrane trafficking. Accomplishes its multiple functions by interacting with distinct downstream effectors. Acts as a GTP sensor for GTP-dependent exocytosis of dense core vesicles. The RALA-exocyst complex regulates integrin-dependent membrane raft exocytosis and growth signaling. Key regulator of LPAR1 signaling and competes with GRK2 for binding to LPAR1 thus affecting the signaling properties of the receptor. Required for anchorage-independent proliferation of transformed cells. During mitosis, supports the stabilization and elongation of the intracellular bridge between dividing cells. Cooperates with EXOC2 to recruit other components of the exocyst to the early midbody. During mitosis, also controls mitochondrial fission by recruiting to the mitochondrion RALBP1, which mediates the phosphorylation and activation of DNM1L by the mitotic kinase cyclin B-CDK1. This Homo sapiens (Human) protein is Ras-related protein Ral-A (RALA).